Reading from the N-terminus, the 597-residue chain is UvrABC system protein C (597 aa).

Positions 14-91 (KKPGCYLWKD…INQYQPRFNL (78 aa)) constitute a GIY-YIG domain.

This sequence belongs to the UvrC family. In terms of assembly, interacts with UvrB in an incision complex.

It is found in the cytoplasm. In terms of biological role, the UvrABC repair system catalyzes the recognition and processing of DNA lesions. UvrC both incises the 5' and 3' sides of the lesion. The N-terminal half is responsible for the 3' incision and the C-terminal half is responsible for the 5' incision. In Mycoplasma genitalium (strain ATCC 33530 / DSM 19775 / NCTC 10195 / G37) (Mycoplasmoides genitalium), this protein is UvrABC system protein C.